The sequence spans 385 residues: DNA double-strand break repair protein Mre11 (385 aa).

Mn(2+)-binding residues include D14, H16, and D58. Residue H94 is the Proton donor of the active site. Mn(2+)-binding residues include H180, H216, and H218.

The protein belongs to the MRE11/RAD32 family. Homodimer. Forms a heterotetramer composed of two Mre11 subunits and two Rad50 subunits. Homodimerization facilitates DNA binding. The cofactor is Mn(2+).

With respect to regulation, nuclease activity is regulated by Rad50. The mirin-derivative PFM39, specifically inhibits the 3'-5' exonuclease activity. The N-alkylated mirin-derivatives PFM03 and PFM01 specifically inhibit the endonuclease activity. Functionally, part of the Rad50/Mre11 complex, which is involved in the early steps of DNA double-strand break (DSB) repair. The complex may facilitate opening of the processed DNA ends to aid in the recruitment of HerA and NurA. Mre11 binds to DSB ends and has both double-stranded 3'-5' exonuclease activity and single-stranded endonuclease activity. The sequence is that of DNA double-strand break repair protein Mre11 from Thermotoga maritima (strain ATCC 43589 / DSM 3109 / JCM 10099 / NBRC 100826 / MSB8).